The following is an 838-amino-acid chain: Adenylate cyclase (838 aa).

The catalytic stretch occupies residues 1–541 (MNYDLFSAQK…DLRLSFPVTV (541 aa)). Positions 547–838 (EDLTHACEIR…VPFHSRLAMS (292 aa)) are regulatory.

The protein belongs to the adenylyl cyclase class-1 family.

The protein localises to the cytoplasm. The enzyme catalyses ATP = 3',5'-cyclic AMP + diphosphate. The polypeptide is Adenylate cyclase (cya) (Pasteurella multocida (strain Pm70)).